Consider the following 217-residue polypeptide: Probable GTP-binding protein EngB (217 aa).

The 174-residue stretch at 44-217 (DRVEVCFAGR…TLRSIIAHLE (174 aa)) folds into the EngB-type G domain. Residues 52–59 (GRSNVGKS), 79–83 (GRTQE), 97–100 (DLPG), 164–167 (TKAD), and 198–200 (TSS) contribute to the GTP site. S59 and T81 together coordinate Mg(2+).

Belongs to the TRAFAC class TrmE-Era-EngA-EngB-Septin-like GTPase superfamily. EngB GTPase family. It depends on Mg(2+) as a cofactor.

In terms of biological role, necessary for normal cell division and for the maintenance of normal septation. The protein is Probable GTP-binding protein EngB of Ruegeria pomeroyi (strain ATCC 700808 / DSM 15171 / DSS-3) (Silicibacter pomeroyi).